Consider the following 197-residue polypeptide: 3-isopropylmalate dehydratase small subunit (197 aa).

The protein belongs to the LeuD family. LeuD type 1 subfamily. Heterodimer of LeuC and LeuD.

The enzyme catalyses (2R,3S)-3-isopropylmalate = (2S)-2-isopropylmalate. The protein operates within amino-acid biosynthesis; L-leucine biosynthesis; L-leucine from 3-methyl-2-oxobutanoate: step 2/4. Functionally, catalyzes the isomerization between 2-isopropylmalate and 3-isopropylmalate, via the formation of 2-isopropylmaleate. This Acidothermus cellulolyticus (strain ATCC 43068 / DSM 8971 / 11B) protein is 3-isopropylmalate dehydratase small subunit.